Reading from the N-terminus, the 969-residue chain is RNA polymerase-associated protein RapA (969 aa).

Positions 164–334 (EVGRRHAPRV…FARLRLLDSD (171 aa)) constitute a Helicase ATP-binding domain. 177 to 184 (DEVGLGKT) contacts ATP. The DEAH box signature appears at 280–283 (DEAH). A Helicase C-terminal domain is found at 492 to 668 (RVNWLLEKLK…GSNEALDDVI (177 aa)).

Belongs to the SNF2/RAD54 helicase family. RapA subfamily. In terms of assembly, interacts with the RNAP. Has a higher affinity for the core RNAP than for the holoenzyme. Its ATPase activity is stimulated by binding to RNAP.

Functionally, transcription regulator that activates transcription by stimulating RNA polymerase (RNAP) recycling in case of stress conditions such as supercoiled DNA or high salt concentrations. Probably acts by releasing the RNAP, when it is trapped or immobilized on tightly supercoiled DNA. Does not activate transcription on linear DNA. Probably not involved in DNA repair. This Vibrio vulnificus (strain CMCP6) protein is RNA polymerase-associated protein RapA.